Here is a 138-residue protein sequence, read N- to C-terminus: Ribulose bisphosphate carboxylase small subunit (138 aa).

This sequence belongs to the RuBisCO small chain family. Heterohexadecamer of 8 large and 8 small subunits.

It localises to the plastid. The protein resides in the chloroplast. RuBisCO catalyzes two reactions: the carboxylation of D-ribulose 1,5-bisphosphate, the primary event in carbon dioxide fixation, as well as the oxidative fragmentation of the pentose substrate in the photorespiration process. Both reactions occur simultaneously and in competition at the same active site. Although the small subunit is not catalytic it is essential for maximal activity. The sequence is that of Ribulose bisphosphate carboxylase small subunit from Pyropia dentata (Red alga).